A 520-amino-acid chain; its full sequence is FAD-linked oxidoreductase OXR2 (520 aa).

The first 23 residues, 1–23, serve as a signal peptide directing secretion; sequence MKSFSLLASAGLATLASLPLTMA. N77, N220, N378, and N390 each carry an N-linked (GlcNAc...) asparagine glycan. Residues 79 to 251 enclose the FAD-binding PCMH-type domain; the sequence is SRPTIRLVVV…TSFQSKIYPR (173 aa).

It belongs to the oxygen-dependent FAD-linked oxidoreductase family. FAD is required as a cofactor.

It functions in the pathway polyketide biosynthesis. Functionally, FAD-linked oxidoreductase; part of the gene cluster that mediates the biosynthesis of pyriculol and pyriculariol, two heptaketides that induce lesion formation upon application on rice leaves but are dispensable for pathogenicity. The highly reducing polyketide synthase synthesizes the heptaketide backbone of pyriculol and pyriculariol. Pyriculol and pyriculariol contain several hydroxyl moieties and double bonds, so it can be assumed that several reduction steps occur during biosynthesis. These reactions could be executed by PKS19 itself or partly by the tailoring enzymes OXR1, OXR2, RED1, RED2 or RED3, identified within the cluster. The FAD-linked oxidoreductase OXR1 is the only tailoring enzyme for which the function has been determined yet, and is involved in the oxidation of dihydropyriculol and dihydropyriculariol into pyriculol and pyriculariol, respectively. This Pyricularia oryzae (strain 70-15 / ATCC MYA-4617 / FGSC 8958) (Rice blast fungus) protein is FAD-linked oxidoreductase OXR2.